The chain runs to 319 residues: Protein SICKLE (319 aa).

Disordered regions lie at residues 1–59 (MEDS…TQRF), 71–239 (SFKK…PGAE), and 262–299 (CSDA…SNQQ). 2 stretches are compositionally biased toward polar residues: residues 27 to 56 (TTGT…SFET) and 78 to 88 (PKQQYISSPSH). Over residues 93-103 (PVPPQFPPSVP) the composition is skewed to pro residues. The span at 185–210 (SYNNTPPQFSNYGRQNANWGGNTYPN) shows a compositional bias: polar residues. The segment covering 228–238 (DGGRRPMEPGA) has biased composition (basic and acidic residues). The span at 285-299 (SVTSEATHKTSSNQQ) shows a compositional bias: polar residues.

In terms of assembly, interacts with ubiquitin thioesterases UBP12 and UBP13, and with protein phosphatase 2A subunits PP2AB1, PP2AB2, PP2A3, PP2A4, PP2AA1 and PP2AA2. As to expression, expressed in the shoot apical meristem (SAM), embryos, seedlings, root tips, and root and leaf primordia.

The protein localises to the nucleus. The protein resides in the cytoplasm. It is found in the cytosol. In terms of biological role, involved in miRNAs and siRNAs biogenesis and thus promotes gene silencing. Modulates auxin (IAA) transport-related developmental programs by regulating protein phosphatase 2A (PP2As)-driven auxin efflux carrier PIN proteins recycling and polarity. Required during development. Necessary for abiotic stress (e.g. chilling and salt) tolerance. The chain is Protein SICKLE from Arabidopsis thaliana (Mouse-ear cress).